Consider the following 604-residue polypeptide: Linalool synthase Tps-5042L13, chloroplastic (604 aa).

A chloroplast-targeting transit peptide spans 1–34 (MSSMRIYVAIMKKPSVKHVDNVDKKASKPSWRVS). Residues R323, D360, D364, R501, and D504 each contribute to the (2E)-geranyl diphosphate site. Mg(2+) is bound by residues D360 and D364. Positions 360-364 (DDVYD) match the DDXXD motif motif. 3 residues coordinate Mg(2+): D504, T508, and E512.

Belongs to the terpene synthase family. Tpsb subfamily. In terms of assembly, monomer. Requires Mg(2+) as cofactor. It depends on Mn(2+) as a cofactor.

The protein localises to the plastid. It localises to the chloroplast. It carries out the reaction (2E)-geranyl diphosphate + H2O = linalool + diphosphate. It participates in secondary metabolite biosynthesis; terpenoid biosynthesis. In terms of biological role, monoterpene synthase (mono-TPS) involved in the biosynthesis of monoterpenes natural products. Catalyzes the conversion of (2E)-geranyl diphosphate (GPP) into linalool. In Perilla frutescens (Beefsteak mint), this protein is Linalool synthase Tps-5042L13, chloroplastic.